Here is a 497-residue protein sequence, read N- to C-terminus: Glycerol kinase (497 aa).

Thr-12 contributes to the ADP binding site. Thr-12, Thr-13, and Ser-14 together coordinate ATP. Thr-12 lines the sn-glycerol 3-phosphate pocket. Residue Arg-16 participates in ADP binding. Residues Arg-82, Glu-83, Tyr-134, and Asp-243 each coordinate sn-glycerol 3-phosphate. The glycerol site is built by Arg-82, Glu-83, Tyr-134, Asp-243, and Gln-244. The ADP site is built by Thr-265 and Gly-308. Residues Thr-265, Gly-308, Gln-312, and Gly-409 each contribute to the ATP site. Positions 409 and 413 each coordinate ADP.

It belongs to the FGGY kinase family.

It carries out the reaction glycerol + ATP = sn-glycerol 3-phosphate + ADP + H(+). It functions in the pathway polyol metabolism; glycerol degradation via glycerol kinase pathway; sn-glycerol 3-phosphate from glycerol: step 1/1. Inhibited by fructose 1,6-bisphosphate (FBP). Its function is as follows. Key enzyme in the regulation of glycerol uptake and metabolism. Catalyzes the phosphorylation of glycerol to yield sn-glycerol 3-phosphate. The protein is Glycerol kinase of Nitratidesulfovibrio vulgaris (strain DSM 19637 / Miyazaki F) (Desulfovibrio vulgaris).